We begin with the raw amino-acid sequence, 273 residues long: Transposable element Tc1 transposase (273 aa).

Belongs to the transposase 5 family.

It is found in the nucleus. Its function is as follows. Probably essential for transposable element Tc1 transposition. The insertion of Tc1 is the main cause of spontaneous mutations. It is an endonuclease which can produce a single strand nick at the 5'-end of the transposon. This Caenorhabditis elegans protein is Transposable element Tc1 transposase (tc1a).